A 292-amino-acid polypeptide reads, in one-letter code: 2-(5''-triphosphoribosyl)-3'-dephosphocoenzyme-A synthase (292 aa).

Belongs to the CitG/MdcB family.

It catalyses the reaction 3'-dephospho-CoA + ATP = 2'-(5''-triphospho-alpha-D-ribosyl)-3'-dephospho-CoA + adenine. Functionally, catalyzes the formation of 2-(5''-triphosphoribosyl)-3'-dephosphocoenzyme-A, the precursor of the prosthetic group of the holo-acyl carrier protein (gamma chain) of citrate lyase, from ATP and dephospho-CoA. The protein is 2-(5''-triphosphoribosyl)-3'-dephosphocoenzyme-A synthase of Escherichia coli O17:K52:H18 (strain UMN026 / ExPEC).